A 123-amino-acid chain; its full sequence is Large ribosomal subunit protein bL17 (123 aa).

It belongs to the bacterial ribosomal protein bL17 family. In terms of assembly, part of the 50S ribosomal subunit. Contacts protein L32.

The polypeptide is Large ribosomal subunit protein bL17 (Borreliella burgdorferi (strain ATCC 35210 / DSM 4680 / CIP 102532 / B31) (Borrelia burgdorferi)).